We begin with the raw amino-acid sequence, 139 residues long: Large ribosomal subunit protein uL14 (139 aa).

This sequence belongs to the universal ribosomal protein uL14 family.

The sequence is that of Large ribosomal subunit protein uL14 (RPL23) from Syntrichia ruralis (Great hairy screw-moss).